The sequence spans 578 residues: Moesin/ezrin/radixin homolog 1 (578 aa).

The region spanning 1-296 is the FERM domain; that stretch reads MSPKALNVRV…GNHELYMRRR (296 aa). The disordered stretch occupies residues 463 to 555; the sequence is ASTTPQHHHV…HRENVRQGRD (93 aa). A compositionally biased stretch (acidic residues) spans 475 to 484; sequence DENENEEELT. The segment covering 492-555 has biased composition (basic and acidic residues); that stretch reads VSRDLDTDEH…HRENVRQGRD (64 aa). Threonine 559 bears the Phosphothreonine mark.

In terms of assembly, interacts with wgn. Interacts with Mer and arm at the adherens junction. Interacts with cytoskeletal actin at apical buds of microvilli in the precellularised embryo. Interacts with PCID2 (possibly via FERM domain). Post-translationally, phosphorylated on Thr-559. In the oocyte this phosphorylation is induced by phosphatidylinositol 4,5-bisphosphate (PtdIns[4,5]P(2)) generated by sktl.

The protein localises to the cell junction. The protein resides in the adherens junction. It is found in the cell projection. It localises to the microvillus. Its subcellular location is the rhabdomere. The protein localises to the cell membrane. The protein resides in the cytoplasm. It is found in the cytoskeleton. It localises to the cell cortex. Its subcellular location is the cilium. The protein localises to the flagellum. The protein resides in the nucleus. It is found in the nucleoplasm. It localises to the chromosome. Functionally, involved in connections of major cytoskeletal structures to the plasma membrane. Together with wgn, involved in control of axon targeting of R8 and R2-R5 photoreceptors, independent of egr. In the nucleus, recruited to sites of active transcription by RNA polymerase II where it has a role in nuclear mRNA export together with the mRNA export factor PCID2 and other messenger ribonucleoprotein (mRNP) particles. The polypeptide is Moesin/ezrin/radixin homolog 1 (Moe) (Drosophila melanogaster (Fruit fly)).